The primary structure comprises 118 residues: Large ribosomal subunit protein bL20 (118 aa).

The protein belongs to the bacterial ribosomal protein bL20 family.

Binds directly to 23S ribosomal RNA and is necessary for the in vitro assembly process of the 50S ribosomal subunit. It is not involved in the protein synthesizing functions of that subunit. The sequence is that of Large ribosomal subunit protein bL20 from Francisella philomiragia subsp. philomiragia (strain ATCC 25017 / CCUG 19701 / FSC 153 / O#319-036).